The primary structure comprises 171 residues: Histone H1, gonadal (171 aa).

2 disordered regions span residues 1–40 (AASP…AHPP) and 133–171 (AKAK…KAKP). The segment covering 9-35 (ASPRKSPKKSPRKSPKKKSPRKRKARS) has biased composition (basic residues). Positions 37-111 (AHPPVIDMIT…GATGRFRVGA (75 aa)) constitute an H15 domain.

This sequence belongs to the histone H1/H5 family. As to expression, sperm.

It is found in the nucleus. It localises to the chromosome. Functionally, histones H1 are necessary for the condensation of nucleosome chains into higher-order structures. In Echinolampas crassa (Sea urchin), this protein is Histone H1, gonadal.